The following is a 106-amino-acid chain: MTGTLDQLESTIAARRAADPSTSYVAALFAKGMPKIAQKLGEEAVETVIAAMAGDRRGVTGEAADLLFHLMVLLAEAGVPFADVLAELDRREGTSGLAEKAARPKG.

It belongs to the PRA-PH family.

Its subcellular location is the cytoplasm. The catalysed reaction is 1-(5-phospho-beta-D-ribosyl)-ATP + H2O = 1-(5-phospho-beta-D-ribosyl)-5'-AMP + diphosphate + H(+). The protein operates within amino-acid biosynthesis; L-histidine biosynthesis; L-histidine from 5-phospho-alpha-D-ribose 1-diphosphate: step 2/9. This Rhizorhabdus wittichii (strain DSM 6014 / CCUG 31198 / JCM 15750 / NBRC 105917 / EY 4224 / RW1) (Sphingomonas wittichii) protein is Phosphoribosyl-ATP pyrophosphatase.